We begin with the raw amino-acid sequence, 211 residues long: FMN-dependent NADH:quinone oxidoreductase 2 (211 aa).

17–19 (SYS) is an FMN binding site.

It belongs to the azoreductase type 1 family. In terms of assembly, homodimer. The cofactor is FMN.

The catalysed reaction is 2 a quinone + NADH + H(+) = 2 a 1,4-benzosemiquinone + NAD(+). It carries out the reaction N,N-dimethyl-1,4-phenylenediamine + anthranilate + 2 NAD(+) = 2-(4-dimethylaminophenyl)diazenylbenzoate + 2 NADH + 2 H(+). In terms of biological role, quinone reductase that provides resistance to thiol-specific stress caused by electrophilic quinones. Functionally, also exhibits azoreductase activity. Catalyzes the reductive cleavage of the azo bond in aromatic azo compounds to the corresponding amines. The chain is FMN-dependent NADH:quinone oxidoreductase 2 from Bacillus licheniformis (strain ATCC 14580 / DSM 13 / JCM 2505 / CCUG 7422 / NBRC 12200 / NCIMB 9375 / NCTC 10341 / NRRL NRS-1264 / Gibson 46).